The sequence spans 229 residues: 5'-methylthioadenosine/S-adenosylhomocysteine nucleosidase (229 aa).

Glutamate 12 serves as the catalytic Proton acceptor. Substrate-binding positions include glycine 78, isoleucine 152, and 173–174 (ME). Catalysis depends on aspartate 197, which acts as the Proton donor.

It belongs to the PNP/UDP phosphorylase family. MtnN subfamily.

It carries out the reaction S-adenosyl-L-homocysteine + H2O = S-(5-deoxy-D-ribos-5-yl)-L-homocysteine + adenine. It catalyses the reaction S-methyl-5'-thioadenosine + H2O = 5-(methylsulfanyl)-D-ribose + adenine. The enzyme catalyses 5'-deoxyadenosine + H2O = 5-deoxy-D-ribose + adenine. It functions in the pathway amino-acid biosynthesis; L-methionine biosynthesis via salvage pathway; S-methyl-5-thio-alpha-D-ribose 1-phosphate from S-methyl-5'-thioadenosine (hydrolase route): step 1/2. Catalyzes the irreversible cleavage of the glycosidic bond in both 5'-methylthioadenosine (MTA) and S-adenosylhomocysteine (SAH/AdoHcy) to adenine and the corresponding thioribose, 5'-methylthioribose and S-ribosylhomocysteine, respectively. Also cleaves 5'-deoxyadenosine, a toxic by-product of radical S-adenosylmethionine (SAM) enzymes, into 5-deoxyribose and adenine. The chain is 5'-methylthioadenosine/S-adenosylhomocysteine nucleosidase from Haemophilus influenzae (strain PittGG).